We begin with the raw amino-acid sequence, 74 residues long: RNA-binding protein Hfq (74 aa).

In terms of domain architecture, Sm spans 9–69 (DQFLNQLRKE…ISTFAPQKNV (61 aa)).

This sequence belongs to the Hfq family. Homohexamer.

RNA chaperone that binds small regulatory RNA (sRNAs) and mRNAs to facilitate mRNA translational regulation in response to envelope stress, environmental stress and changes in metabolite concentrations. Also binds with high specificity to tRNAs. This Anoxybacillus flavithermus (strain DSM 21510 / WK1) protein is RNA-binding protein Hfq.